Consider the following 74-residue polypeptide: Exodeoxyribonuclease 7 small subunit (74 aa).

This sequence belongs to the XseB family. Heterooligomer composed of large and small subunits.

The protein localises to the cytoplasm. The enzyme catalyses Exonucleolytic cleavage in either 5'- to 3'- or 3'- to 5'-direction to yield nucleoside 5'-phosphates.. In terms of biological role, bidirectionally degrades single-stranded DNA into large acid-insoluble oligonucleotides, which are then degraded further into small acid-soluble oligonucleotides. This chain is Exodeoxyribonuclease 7 small subunit, found in Clostridium beijerinckii (strain ATCC 51743 / NCIMB 8052) (Clostridium acetobutylicum).